Here is a 1494-residue protein sequence, read N- to C-terminus: Neuropathy target esterase sws (1494 aa).

Over 1–35 (MDVLELLRVSGSNMYYSTFLADAWCYYISNQITMT) the chain is Lumenal. Residues 36–56 (MYLYCALGVLSMLFIGWFVYF) traverse the membrane as a helical segment. Residues 57-1494 (KRLARLRLRH…NTNNETKNYL (1438 aa)) lie on the Cytoplasmic side of the membrane. 176-303 (IFGHFEKPIF…IRVIQVIMIR (128 aa)) is a binding site for a nucleoside 3',5'-cyclic phosphate. The segment covering 362-372 (ASGTAGSTHTA) has biased composition (low complexity). Disordered stretches follow at residues 362–405 (ASGT…ELSG) and 422–452 (NSYPPLYHQRESDGNLSTRRGSITQQEQPEV). Positions 435 to 449 (GNLSTRRGSITQQEQ) are enriched in polar residues. A Phosphoserine modification is found at Ser443. A nucleoside 3',5'-cyclic phosphate-binding positions include 474–601 (ELGL…VVRR) and 590–717 (IVLD…LSHR). One can recognise a PNPLA domain in the interval 944 to 1110 (LVLGGGGARG…VNNLPGHLWR (167 aa)). The GXGXXG motif lies at 948–953 (GGGARG). The short motif at 975-979 (GVSIG) is the GXSXG element. The active-site Nucleophile is Ser977. The active-site Proton acceptor is Asp1097. The DGA/G motif lies at 1097–1099 (DGG). The disordered stretch occupies residues 1367 to 1494 (MDKATQSTPP…NTNNETKNYL (128 aa)). Positions 1370 to 1381 (ATQSTPPLQSKA) are enriched in polar residues. 2 stretches are compositionally biased toward basic and acidic residues: residues 1389 to 1420 (SKEEARHEWEIKREQKQELAREQELERERELS) and 1452 to 1483 (MDKKKTKDNDRDEVRGSAEDKGKEKEEDKENR). The segment covering 1484 to 1494 (SNTNNETKNYL) has biased composition (polar residues).

This sequence belongs to the NTE family. In terms of assembly, interacts with Pka-C3; interaction inhibits the catalytic function of Pka-C3 and the esterase activity of sws.

It localises to the endoplasmic reticulum membrane. It catalyses the reaction a 1-acyl-sn-glycero-3-phosphocholine + H2O = sn-glycerol 3-phosphocholine + a fatty acid + H(+). Functionally, phospholipase B that deacylates intracellular phosphatidylcholine (PtdCho), generating glycerophosphocholine (GroPtdCho). This deacylation occurs at both sn-2 and sn-1 positions of PtdCho. Its specific chemical modification by certain organophosphorus (OP) compounds leads to distal axonopathy. Plays a role in the signaling mechanism between neurons and glia that regulates glia wrapping during development of the adult brain. Essential for membrane lipid homeostasis and cell survival in both neurons and glia of the adult brain. The chain is Neuropathy target esterase sws from Drosophila pseudoobscura pseudoobscura (Fruit fly).